Consider the following 415-residue polypeptide: Casein kinase 1-like protein 3 (415 aa).

In terms of domain architecture, Protein kinase spans 9-277 (YKLGRKIGGG…FLKRLFRDLF (269 aa)). ATP-binding positions include 15–23 (IGGGSFGEI) and Lys38. Catalysis depends on Asp128, which acts as the Proton acceptor. Composition is skewed to polar residues over residues 303–314 (NQSQAVPGSSNP) and 373–415 (NMPS…SPEK). 2 disordered regions span residues 303-330 (NQSQAVPGSSNPRAMPVDTSNHRGGPNI) and 344-415 (NAIG…SPEK).

Belongs to the protein kinase superfamily. CK1 Ser/Thr protein kinase family. Casein kinase I subfamily. Post-translationally, slightly autophosphorylated. In terms of tissue distribution, expressed in seedlings, stems, leaves and flowers.

The protein localises to the cytoplasm. It localises to the nucleus. The enzyme catalyses L-seryl-[protein] + ATP = O-phospho-L-seryl-[protein] + ADP + H(+). It catalyses the reaction L-threonyl-[protein] + ATP = O-phospho-L-threonyl-[protein] + ADP + H(+). Protein kinase involved in blue light responses (e.g. hypocotyl elongation and flowering) by phosphorylating CRY2 to reduce its stability. This is Casein kinase 1-like protein 3 from Arabidopsis thaliana (Mouse-ear cress).